Consider the following 289-residue polypeptide: Pyridoxal kinase PdxY (289 aa).

Residues Ser9 and 44–45 (TQ) contribute to the substrate site. ATP is bound by residues Asp112, Val144, Glu149, and Lys182. Asp221 contacts substrate.

Belongs to the pyridoxine kinase family. PdxY subfamily. Homodimer. It depends on Mg(2+) as a cofactor.

It carries out the reaction pyridoxal + ATP = pyridoxal 5'-phosphate + ADP + H(+). It functions in the pathway cofactor metabolism; pyridoxal 5'-phosphate salvage; pyridoxal 5'-phosphate from pyridoxal: step 1/1. Pyridoxal kinase involved in the salvage pathway of pyridoxal 5'-phosphate (PLP). Catalyzes the phosphorylation of pyridoxal to PLP. This is Pyridoxal kinase PdxY from Vibrio parahaemolyticus serotype O3:K6 (strain RIMD 2210633).